We begin with the raw amino-acid sequence, 145 residues long: uncharacterized protein (145 aa).

A helical transmembrane segment spans residues 46–66; sequence FFFLFFLFFFFFFTFQFLVAF.

The protein localises to the membrane. This is an uncharacterized protein from Saccharomyces cerevisiae (strain ATCC 204508 / S288c) (Baker's yeast).